The sequence spans 290 residues: Bifunctional protein FolD (290 aa).

NADP(+)-binding positions include 165–167, Ser190, and Ile231; that span reads GRS.

This sequence belongs to the tetrahydrofolate dehydrogenase/cyclohydrolase family. As to quaternary structure, homodimer.

It carries out the reaction (6R)-5,10-methylene-5,6,7,8-tetrahydrofolate + NADP(+) = (6R)-5,10-methenyltetrahydrofolate + NADPH. It catalyses the reaction (6R)-5,10-methenyltetrahydrofolate + H2O = (6R)-10-formyltetrahydrofolate + H(+). It functions in the pathway one-carbon metabolism; tetrahydrofolate interconversion. Its function is as follows. Catalyzes the oxidation of 5,10-methylenetetrahydrofolate to 5,10-methenyltetrahydrofolate and then the hydrolysis of 5,10-methenyltetrahydrofolate to 10-formyltetrahydrofolate. This Aromatoleum aromaticum (strain DSM 19018 / LMG 30748 / EbN1) (Azoarcus sp. (strain EbN1)) protein is Bifunctional protein FolD.